The following is a 409-amino-acid chain: Protein a6 (409 aa).

The residue at position 86 (Ser86) is a Phosphoserine. Residues 106–120 (RAHRTGRRQAPRRAA) are compositionally biased toward basic residues. A disordered region spans residues 106–165 (RAHRTGRRQAPRRAATHSYPVTDSILITSDDEHNEQEPSSTARVRSQLSMRSPPPLAPLT). Thr133 carries the phosphothreonine modification. Phosphoserine is present on Ser134. Residues 142–155 (EPSSTARVRSQLSM) show a composition bias toward polar residues.

The polypeptide is Protein a6 (a6) (Drosophila melanogaster (Fruit fly)).